Here is a 389-residue protein sequence, read N- to C-terminus: Cuticlin-3 (389 aa).

Positions 1–19 are cleaved as a signal peptide; the sequence is MARYSLGLGLCLLVASVSA. Residues 20-354 lie on the Extracellular side of the membrane; that stretch reads IPVDNNVEGE…ELCISSFHIS (335 aa). A ZP domain is found at 33-278; that stretch reads ECGPTSITVN…PTCSEPQGFG (246 aa). An N-linked (GlcNAc...) asparagine glycan is attached at N284. The helical transmembrane segment at 355-375 threads the bilayer; the sequence is VVTVFLGLTVFVAIFITYMIV. Residues 376–389 lie on the Cytoplasmic side of the membrane; the sequence is SRMMVPSDKMQSAC.

It localises to the cell membrane. Functionally, plays a role in alae formation in L1 larvae. This Caenorhabditis elegans protein is Cuticlin-3.